We begin with the raw amino-acid sequence, 427 residues long: 3-phosphoshikimate 1-carboxyvinyltransferase (427 aa).

The 3-phosphoshikimate site is built by Lys20, Ser21, and Arg25. Lys20 contributes to the phosphoenolpyruvate binding site. The phosphoenolpyruvate site is built by Gly92 and Arg120. 4 residues coordinate 3-phosphoshikimate: Ser166, Gln168, Asp312, and Lys339. Residue Gln168 participates in phosphoenolpyruvate binding. Residue Asp312 is the Proton acceptor of the active site. Residues Arg343 and Arg385 each coordinate phosphoenolpyruvate.

The protein belongs to the EPSP synthase family. In terms of assembly, monomer.

The protein resides in the cytoplasm. The catalysed reaction is 3-phosphoshikimate + phosphoenolpyruvate = 5-O-(1-carboxyvinyl)-3-phosphoshikimate + phosphate. The protein operates within metabolic intermediate biosynthesis; chorismate biosynthesis; chorismate from D-erythrose 4-phosphate and phosphoenolpyruvate: step 6/7. Catalyzes the transfer of the enolpyruvyl moiety of phosphoenolpyruvate (PEP) to the 5-hydroxyl of shikimate-3-phosphate (S3P) to produce enolpyruvyl shikimate-3-phosphate and inorganic phosphate. The protein is 3-phosphoshikimate 1-carboxyvinyltransferase of Streptococcus thermophilus (strain CNRZ 1066).